The primary structure comprises 130 residues: uncharacterized protein (130 aa).

The first 23 residues, 1 to 23 (MINRKVVYALSALLLFVYSYAFI), serve as a signal peptide directing secretion.

This is an uncharacterized protein from Aquifex aeolicus (strain VF5).